A 250-amino-acid chain; its full sequence is Recombination protein RecR (250 aa).

The segment at 56 to 71 (CRICHNISQEDVCRIC) adopts a C4-type zinc-finger fold. The Toprim domain maps to 79–227 (SIICVVEESK…TVTRLASGIP (149 aa)). The interval 148-172 (LGDADTPADGESSGADAAETGNAKT) is disordered.

The protein belongs to the RecR family.

Functionally, may play a role in DNA repair. It seems to be involved in an RecBC-independent recombinational process of DNA repair. It may act with RecF and RecO. This Corynebacterium jeikeium (strain K411) protein is Recombination protein RecR.